The following is a 161-amino-acid chain: Cytochrome c-type biogenesis protein CcmE (161 aa).

Topologically, residues 1-8 are cytoplasmic; that stretch reads MNARRKKR. The chain crosses the membrane as a helical; Signal-anchor for type II membrane protein span at residues 9-29; the sequence is LALATALIGGVAAIASLLLYA. Residues 30-161 lie on the Periplasmic side of the membrane; the sequence is LNSNLNLFYT…EYDSTQKTGY (132 aa). Heme is bound by residues histidine 131 and tyrosine 135.

It belongs to the CcmE/CycJ family.

It is found in the cell inner membrane. Functionally, heme chaperone required for the biogenesis of c-type cytochromes. Transiently binds heme delivered by CcmC and transfers the heme to apo-cytochromes in a process facilitated by CcmF and CcmH. This chain is Cytochrome c-type biogenesis protein CcmE, found in Shewanella loihica (strain ATCC BAA-1088 / PV-4).